The chain runs to 308 residues: Glutaminase (308 aa).

Ser-66, Asn-117, Glu-161, Asn-168, Tyr-192, Tyr-244, and Val-262 together coordinate substrate.

It belongs to the glutaminase family. Homotetramer.

The catalysed reaction is L-glutamine + H2O = L-glutamate + NH4(+). This Photorhabdus laumondii subsp. laumondii (strain DSM 15139 / CIP 105565 / TT01) (Photorhabdus luminescens subsp. laumondii) protein is Glutaminase.